The following is a 206-amino-acid chain: High frequency lysogenization protein HflD homolog (206 aa).

It belongs to the HflD family.

It localises to the cytoplasm. Its subcellular location is the cell inner membrane. The chain is High frequency lysogenization protein HflD homolog from Marinobacter nauticus (strain ATCC 700491 / DSM 11845 / VT8) (Marinobacter aquaeolei).